We begin with the raw amino-acid sequence, 168 residues long: Mitochondrial inner membrane protein Mpv17 (168 aa).

4 consecutive transmembrane segments (helical) span residues 12 to 29 (INVA…QFFF), 41 to 61 (RTLR…RRWY), 82 to 101 (MLVD…SFLV), and 144 to 166 (LGYQ…SMIL).

It belongs to the peroxisomal membrane protein PXMP2/4 family. Part of a larger complex that may be a homohexamer.

The protein localises to the mitochondrion inner membrane. In terms of biological role, non-selective channel that modulates the membrane potential under normal conditions and oxidative stress, and is involved in mitochondrial homeostasis. Can translocate uridine, but not orotate, across a lipid membrane. Involved in maintenance of mitochondrial ultrastructure. May be involved in mitochondrial DNA (mtDNA) maintenance but does not appear to be directly involved in mitochondrial deoxynucleoside triphosphate (dNTP) pool homeostasis. May be involved in the regulation of reactive oxygen species metabolism and the control of oxidative phosphorylation. The protein is Mitochondrial inner membrane protein Mpv17 of Drosophila melanogaster (Fruit fly).